The sequence spans 130 residues: Histone H2A type 1-F (130 aa).

A disordered region spans residues 1-22 (MSGRGKQGGKARAKAKTRSSRA). Phosphoserine; by RPS6KA5 is present on Ser-2. Arg-4 carries the post-translational modification Citrulline; alternate. Position 4 is a symmetric dimethylarginine; by PRMT5; alternate (Arg-4). An N6-(2-hydroxyisobutyryl)lysine; alternate modification is found at Lys-6. Position 6 is an N6-(beta-hydroxybutyryl)lysine; alternate (Lys-6). A compositionally biased stretch (basic residues) spans 7-19 (QGGKARAKAKTRS). Lys-10 bears the N6-(2-hydroxyisobutyryl)lysine mark. Residue Lys-10 is modified to N6-lactoyllysine; alternate. An N6-(2-hydroxyisobutyryl)lysine; alternate modification is found at Lys-37. Lys-37 bears the N6-(beta-hydroxybutyryl)lysine; alternate mark. The residue at position 37 (Lys-37) is an N6-crotonyllysine; alternate. Residues Lys-75, Lys-76, and Lys-96 each carry the N6-(2-hydroxyisobutyryl)lysine modification. N6-glutaryllysine; alternate is present on Lys-96. Residue Gln-105 is modified to N5-methylglutamine. Lys-119 is subject to N6-(2-hydroxyisobutyryl)lysine; alternate. Lys-119 and Lys-120 each carry N6-crotonyllysine; alternate. An N6-glutaryllysine; alternate mark is found at Lys-119 and Lys-120. Lys-120 carries the post-translational modification N6-(beta-hydroxybutyryl)lysine; alternate. Residue Lys-120 forms a Glycyl lysine isopeptide (Lys-Gly) (interchain with G-Cter in ubiquitin); alternate linkage. A Phosphothreonine; by DCAF1 modification is found at Thr-121. Lys-126 is modified (N6-(beta-hydroxybutyryl)lysine; alternate). Residue Lys-126 is modified to N6-crotonyllysine; alternate. Lys-126 carries the post-translational modification N6-glutaryllysine; alternate.

The protein belongs to the histone H2A family. In terms of assembly, the nucleosome is a histone octamer containing two molecules each of H2A, H2B, H3 and H4 assembled in one H3-H4 heterotetramer and two H2A-H2B heterodimers. The octamer wraps approximately 147 bp of DNA. Post-translationally, deiminated on Arg-4 in granulocytes upon calcium entry. In terms of processing, monoubiquitination of Lys-120 (H2AK119Ub) by RING1, TRIM37 and RNF2/RING2 complex gives a specific tag for epigenetic transcriptional repression and participates in X chromosome inactivation of female mammals. It is involved in the initiation of both imprinted and random X inactivation. Ubiquitinated H2A is enriched in inactive X chromosome chromatin. Ubiquitination of H2A functions downstream of methylation of 'Lys-27' of histone H3 (H3K27me). H2AK119Ub by RNF2/RING2 can also be induced by ultraviolet and may be involved in DNA repair. Following DNA double-strand breaks (DSBs), it is ubiquitinated through 'Lys-63' linkage of ubiquitin moieties by the E2 ligase UBE2N and the E3 ligases RNF8 and RNF168, leading to the recruitment of repair proteins to sites of DNA damage. Ubiquitination at Lys-14 and Lys-16 (H2AK13Ub and H2AK15Ub, respectively) in response to DNA damage is initiated by RNF168 that mediates monoubiquitination at these 2 sites, and 'Lys-63'-linked ubiquitin are then conjugated to monoubiquitin; RNF8 is able to extend 'Lys-63'-linked ubiquitin chains in vitro. H2AK119Ub and ionizing radiation-induced 'Lys-63'-linked ubiquitination (H2AK13Ub and H2AK15Ub) are distinct events. Phosphorylation on Ser-2 (H2AS1ph) is enhanced during mitosis. Phosphorylation on Ser-2 by RPS6KA5/MSK1 directly represses transcription. Acetylation of H3 inhibits Ser-2 phosphorylation by RPS6KA5/MSK1. Phosphorylation at Thr-121 (H2AT120ph) by DCAF1 is present in the regulatory region of many tumor suppresor genes and down-regulates their transcription. Post-translationally, symmetric dimethylation on Arg-4 by the PRDM1/PRMT5 complex may play a crucial role in the germ-cell lineage. In terms of processing, glutamine methylation at Gln-105 (H2AQ104me) by FBL is specifically dedicated to polymerase I. It is present at 35S ribosomal DNA locus and impairs binding of the FACT complex. Crotonylation (Kcr) is specifically present in male germ cells and marks testis-specific genes in post-meiotic cells, including X-linked genes that escape sex chromosome inactivation in haploid cells. Crotonylation marks active promoters and enhancers and confers resistance to transcriptional repressors. It is also associated with post-meiotically activated genes on autosomes. Post-translationally, hydroxybutyrylation of histones is induced by starvation. In terms of processing, lactylated in macrophages by EP300/P300 by using lactoyl-CoA directly derived from endogenous or exogenous lactate, leading to stimulates gene transcription.

Its subcellular location is the nucleus. It localises to the chromosome. In terms of biological role, core component of nucleosome. Nucleosomes wrap and compact DNA into chromatin, limiting DNA accessibility to the cellular machineries which require DNA as a template. Histones thereby play a central role in transcription regulation, DNA repair, DNA replication and chromosomal stability. DNA accessibility is regulated via a complex set of post-translational modifications of histones, also called histone code, and nucleosome remodeling. The protein is Histone H2A type 1-F (Hist1h2af) of Mus musculus (Mouse).